Reading from the N-terminus, the 229-residue chain is MANELTWHDVLAEEKQQPYFLNTLQTVASERQSGVTIYPPQKDVFNAFRFTELGDVKVVILGQDPYHGPGQAHGLAFSVRPGIAIPPSLLNMYKELENTIPGFTRPNHGYLESWARQGVLLLNTVLTVRAGQAHSHASLGWETFTDKVISLINQHREGVVFLLWGSHAQKKGAIIDKQRHHVLKAPHPSPLSAHRGFFGCNHFVLANQWLEQRGETPIDWMPVLPAECE.

The Proton acceptor role is filled by Asp-64.

This sequence belongs to the uracil-DNA glycosylase (UDG) superfamily. UNG family.

It localises to the cytoplasm. The catalysed reaction is Hydrolyzes single-stranded DNA or mismatched double-stranded DNA and polynucleotides, releasing free uracil.. Functionally, excises uracil residues from the DNA which can arise as a result of misincorporation of dUMP residues by DNA polymerase or due to deamination of cytosine. This is Uracil-DNA glycosylase from Shigella flexneri serotype 5b (strain 8401).